The primary structure comprises 285 residues: GTP cyclohydrolase 1 type 2 homolog (285 aa).

The a divalent metal cation site is built by histidine 65, histidine 66, aspartate 104, histidine 230, and glutamate 234.

Belongs to the GTP cyclohydrolase I type 2/NIF3 family. Homohexamer.

This chain is GTP cyclohydrolase 1 type 2 homolog, found in Streptomyces coelicolor (strain ATCC BAA-471 / A3(2) / M145).